Here is a 203-residue protein sequence, read N- to C-terminus: Ribonuclease HII (203 aa).

The 188-residue stretch at 16 to 203 (ENIACCDEVG…HRKSFLNKIL (188 aa)) folds into the RNase H type-2 domain. Residues aspartate 22, glutamate 23, and aspartate 120 each coordinate a divalent metal cation.

Belongs to the RNase HII family. The cofactor is Mn(2+). Requires Mg(2+) as cofactor.

It is found in the cytoplasm. It catalyses the reaction Endonucleolytic cleavage to 5'-phosphomonoester.. Its function is as follows. Endonuclease that specifically degrades the RNA of RNA-DNA hybrids. This chain is Ribonuclease HII, found in Alkaliphilus oremlandii (strain OhILAs) (Clostridium oremlandii (strain OhILAs)).